Reading from the N-terminus, the 545-residue chain is Monocarboxylate transporter 8 (545 aa).

The interval 1-98 (MALPSPASEE…VETRGTARGF (98 aa)) is disordered. Position 2 is an N-acetylalanine (Ala2). Topologically, residues 2 to 102 (ALPSPASEEA…GTARGFQPPE (101 aa)) are cytoplasmic. 2 tandem repeats follow at residues 29 to 50 (PVPE…PVPV) and 51 to 72 (PPPE…PLPE). The interval 29 to 72 (PVPEPEPEPEPEPEPDPEPVPVPPPEPQPEPEPQPLPDPAPLPE) is 2 X 22 AA approximate tandem repeats. A compositionally biased stretch (acidic residues) spans 33 to 45 (PEPEPEPEPEPDP). Residues 46–70 (EPVPVPPPEPQPEPEPQPLPDPAPL) show a composition bias toward pro residues. Residues 103–123 (GGFGWIVVFAATWCNGSIFGI) form a helical membrane-spanning segment. At 124 to 149 (HNSVGILYSMLLEEEKEKNRQVEFQA) the chain is on the extracellular side. The chain crosses the membrane as a helical span at residues 150 to 170 (AWVGALAMGMIFFCSPIVSIF). At 171–177 (TDRLGCR) the chain is on the cytoplasmic side. The helical transmembrane segment at 178–198 (ITATTGAAVAFIGLHTSSFTS) threads the bilayer. Over 199-206 (SLSLRYFT) the chain is Extracellular. A helical membrane pass occupies residues 207–227 (YGILFGCGCSFAFQPSLVILG). The Cytoplasmic portion of the chain corresponds to 228–235 (HYFQRRLG). Residues 236–256 (LANGVVSAGSSIFSMSFPFLI) traverse the membrane as a helical segment. The Extracellular portion of the chain corresponds to 257-264 (KMLGDKIK). Residues 265–285 (LAQTFQVLSTFMFVLTLLSLT) traverse the membrane as a helical segment. Residues 286–328 (YRPLLPSSQDTPSKRGAHTLRQRFLVQFRKYFNMRVFRQRTYR) lie on the Cytoplasmic side of the membrane. Residues 329–349 (IWAFGIAAAALGYFVPYVHLM) traverse the membrane as a helical segment. Residues 350 to 362 (KYVEDKFKEIKET) lie on the Extracellular side of the membrane. Residues 363-383 (WVLLVCIGATSGLGRLVSGHI) form a helical membrane-spanning segment. Over 384–392 (SDSIPGLKK) the chain is Cytoplasmic. Residues 393–413 (IYLQVLSFLLLGLMSMMIPLC) form a helical membrane-spanning segment. The Extracellular segment spans residues 414–415 (RD). Residues 416 to 436 (FGGLIVVCLFLGLCDGFFITI) traverse the membrane as a helical segment. Residues 437–453 (MAPIAFELVGPMQASQA) are Cytoplasmic-facing. The chain crosses the membrane as a helical span at residues 454–474 (IGYLLGMMALPMIAGPPIAGL). Residues 475–483 (LRNCFGDYH) lie on the Extracellular side of the membrane. Residues 484 to 504 (VAFYFAGVPPIIGAVILFFVP) traverse the membrane as a helical segment. At 505 to 545 (LMHQRMFKKEQRDSSKDKMLSHDPDPNGELLPGSPTPEEPI) the chain is on the cytoplasmic side. The span at 514–529 (EQRDSSKDKMLSHDPD) shows a compositional bias: basic and acidic residues. The segment at 514 to 545 (EQRDSSKDKMLSHDPDPNGELLPGSPTPEEPI) is disordered. A Phosphothreonine modification is found at Thr540.

Belongs to the major facilitator superfamily. Monocarboxylate porter (TC 2.A.1.13) family. In terms of assembly, monomer. Homodimer. Homooligomer. Expressed in cerebral microvessels.

It is found in the cell membrane. The protein localises to the apical cell membrane. It carries out the reaction 3,3',5-triiodo-L-thyronine(out) = 3,3',5-triiodo-L-thyronine(in). The catalysed reaction is 3,3',5'-triiodo-L-thyronine(out) = 3,3',5'-triiodo-L-thyronine(in). It catalyses the reaction L-thyroxine(out) = L-thyroxine(in). The enzyme catalyses 3,3'-diiodo-L-thyronine(out) = 3,3'-diiodo-L-thyronine(in). Functionally, specific thyroid hormone transmembrane transporter, that mediates both uptake and efflux of thyroid hormones across the cell membrane independently of pH or a Na(+) gradient. Major substrates are the iodothyronines T3 and T4 and to a lesser extent rT3 and 3,3-diiodothyronine (3,3'-T2). Acts as an important mediator of thyroid hormone transport, especially T3, through the blood-brain barrier. The sequence is that of Monocarboxylate transporter 8 (Slc16a2) from Mus musculus (Mouse).